Consider the following 376-residue polypeptide: Erythronate-4-phosphate dehydrogenase (376 aa).

The substrate site is built by Ser-45 and Thr-66. Asp-146 and Thr-175 together coordinate NAD(+). Arg-209 is a catalytic residue. Residue Asp-233 participates in NAD(+) binding. Residue Glu-238 is part of the active site. The active-site Proton donor is the His-255. NAD(+) is bound at residue Gly-258. Tyr-259 provides a ligand contact to substrate.

It belongs to the D-isomer specific 2-hydroxyacid dehydrogenase family. PdxB subfamily. In terms of assembly, homodimer.

The protein resides in the cytoplasm. The enzyme catalyses 4-phospho-D-erythronate + NAD(+) = (R)-3-hydroxy-2-oxo-4-phosphooxybutanoate + NADH + H(+). The protein operates within cofactor biosynthesis; pyridoxine 5'-phosphate biosynthesis; pyridoxine 5'-phosphate from D-erythrose 4-phosphate: step 2/5. In terms of biological role, catalyzes the oxidation of erythronate-4-phosphate to 3-hydroxy-2-oxo-4-phosphonooxybutanoate. This Baumannia cicadellinicola subsp. Homalodisca coagulata protein is Erythronate-4-phosphate dehydrogenase.